The chain runs to 885 residues: Ankyrin repeat and SAM domain-containing protein 6 (885 aa).

ANK repeat units follow at residues P8–A37, A68–S97, Y101–A130, L134–H163, L181–H210, V215–H244, K282–L312, D316–K345, H350–L379, and N383–K414. 3-hydroxyasparagine is present on N129. Disordered regions lie at residues D415–M439, M491–E522, S563–E775, and F855–R885. Residues P608 to S640 show a composition bias toward low complexity. S650 carries the phosphoserine modification. The segment covering S650 to A662 has biased composition (polar residues). 2 stretches are compositionally biased toward low complexity: residues G689–S713 and P722–P739. S734 and S742 each carry phosphoserine. The segment covering S750 to G770 has biased composition (low complexity). The SAM domain maps to T773–G836. Polar residues predominate over residues F855 to P865. Residues R876–R885 are compositionally biased toward basic and acidic residues.

In terms of assembly, homooligomer. Interacts with NEK8. Central component of a complex containing at least ANKS6, INVS, NEK8 and NPHP3. ANKS6 may organize complex assembly by linking INVS and NPHP3 to NEK8 and INVS may target the complex to the proximal ciliary axoneme. Interacts (via SAM domain) with BICC1 (via KH domains) in an RNA-dependent manner. Interacts (via SAM domain) with ANKS3 (via SAM domain). Post-translationally, hydroxylated at Asn-129, most probably by HIF1AN. This hydroxylation results in decreased NEK8-binding. As to expression, widely expressed with moderate level in brain, skeletal muscle and testis. Expressed in renal tubules.

It localises to the cell projection. The protein resides in the cilium. The protein localises to the cytoplasm. Functionally, required for renal function. The sequence is that of Ankyrin repeat and SAM domain-containing protein 6 (Anks6) from Rattus norvegicus (Rat).